Consider the following 707-residue polypeptide: Acyl-CoA ligase 891, peroxisomal (707 aa).

259–270 lines the ATP pocket; it reads INYTSGTTGPPK. Residues 525–549 form a fatty acid-binding region; sequence DGWFRTGDVCTIDEKGRFIIIDRRK. The Peroxisome targeting signal motif lies at 705 to 707; the sequence is AKL.

It belongs to the ATP-dependent AMP-binding enzyme family.

It localises to the peroxisome matrix. The enzyme catalyses (4E,8E)-10-(4-hydroxy-6-methoxy-7-methyl-3-oxo-1,3-dihydro-2-benzofuran-5-yl)-4,8-dimethyldeca-4,8-dienoate + ATP + CoA = (4E,8E)-10-(4-hydroxy-6-methoxy-7-methyl-3-oxo-1,3-dihydro-2-benzofuran-5-yl)-4,8-dimethyldeca-4,8-dienoyl-CoA + AMP + diphosphate. The protein operates within secondary metabolite biosynthesis; terpenoid biosynthesis. Acyl-CoA ligase involved in the biosynthesis of mycophenolic acid (MPA), the first isolated antibiotic natural product in the world obtained from a culture of Penicillium brevicompactum in 1893. The peroxisomal acyl-CoA ligase 891 converts the intermediate MFDHMP-3C into MFDHMP-3C-CoA which impairs its diffusion from the peroxisome. The first step of the pathway is the synthesis of 5-methylorsellinic acid (5MOA) by the cytosolic polyketide synthase mpaC. 5MOA is then converted to the phthalide compound 5,7-dihydroxy-4,6-dimethylphthalide (DHMP) by the endoplasmic reticulum-bound cytochrome P450 monooxygenase mpaDE. MpaDE first catalyzes hydroxylation of 5-MOA to 4,6-dihydroxy-2-(hydroxymethyl)-3-methylbenzoic acid (DHMB). MpaDE then acts as a lactone synthase that catalyzes the ring closure to convert DHMB into DHMP. The next step is the prenylation of DHMP by the Golgi apparatus-associated prenyltransferase mpaA to yield farnesyl-DHMP (FDHMP). The ER-bound oxygenase mpaB then mediates the oxidative cleavage the C19-C20 double bond in FDHMP to yield FDHMP-3C via a mycophenolic aldehyde intermediate. The O-methyltransferase mpaG catalyzes the methylation of FDHMP-3C to yield MFDHMP-3C. After the cytosolic methylation of FDHMP-3C, MFDHMP-3C enters into peroxisomes probably via free diffusion due to its low molecular weight. Upon a peroxisomal CoA ligation reaction, catalyzed by a beta-oxidation component enzyme acyl-CoA ligase ACL891, MFDHMP-3C-CoA would then be restricted to peroxisomes for the following beta-oxidation pathway steps. The peroxisomal beta-oxidation machinery than converts MFDHMP-3C-CoA into MPA_CoA, via a beta-oxidation chain-shortening process. Finally mpaH acts as a peroxisomal acyl-CoA hydrolase with high substrate specificity toward MPA-CoA to release the final product MPA. This is Acyl-CoA ligase 891, peroxisomal from Penicillium roqueforti (strain FM164).